The chain runs to 481 residues: UDP-N-acetylmuramoyl-L-alanyl-D-glutamate--L-lysine ligase (481 aa).

Position 42 (S42) interacts with UDP-N-acetyl-alpha-D-muramoyl-L-alanyl-D-glutamate. 118–124 (GTKGKTT) provides a ligand contact to ATP. Residues 160-161 (TT), S187, and R195 contribute to the UDP-N-acetyl-alpha-D-muramoyl-L-alanyl-D-glutamate site. K229 carries the N6-carboxylysine modification. The short motif at 404–407 (DDPN) is the L-lysine recognition motif element.

The protein belongs to the MurCDEF family. MurE subfamily. Carboxylation is probably crucial for Mg(2+) binding and, consequently, for the gamma-phosphate positioning of ATP.

It localises to the cytoplasm. It carries out the reaction UDP-N-acetyl-alpha-D-muramoyl-L-alanyl-D-glutamate + L-lysine + ATP = UDP-N-acetyl-alpha-D-muramoyl-L-alanyl-gamma-D-glutamyl-L-lysine + ADP + phosphate + H(+). It participates in cell wall biogenesis; peptidoglycan biosynthesis. Its function is as follows. Catalyzes the addition of L-lysine to the nucleotide precursor UDP-N-acetylmuramoyl-L-alanyl-D-glutamate (UMAG) in the biosynthesis of bacterial cell-wall peptidoglycan. The polypeptide is UDP-N-acetylmuramoyl-L-alanyl-D-glutamate--L-lysine ligase (Streptococcus pneumoniae (strain ATCC BAA-255 / R6)).